Consider the following 288-residue polypeptide: Probable branched-chain-amino-acid aminotransferase (288 aa).

Lysine 153 carries the post-translational modification N6-(pyridoxal phosphate)lysine.

The protein belongs to the class-IV pyridoxal-phosphate-dependent aminotransferase family. Pyridoxal 5'-phosphate is required as a cofactor.

It catalyses the reaction L-leucine + 2-oxoglutarate = 4-methyl-2-oxopentanoate + L-glutamate. It carries out the reaction L-isoleucine + 2-oxoglutarate = (S)-3-methyl-2-oxopentanoate + L-glutamate. The catalysed reaction is L-valine + 2-oxoglutarate = 3-methyl-2-oxobutanoate + L-glutamate. It participates in amino-acid biosynthesis; L-isoleucine biosynthesis; L-isoleucine from 2-oxobutanoate: step 4/4. Its pathway is amino-acid biosynthesis; L-leucine biosynthesis; L-leucine from 3-methyl-2-oxobutanoate: step 4/4. It functions in the pathway amino-acid biosynthesis; L-valine biosynthesis; L-valine from pyruvate: step 4/4. Acts on leucine, isoleucine and valine. The polypeptide is Probable branched-chain-amino-acid aminotransferase (ilvE) (Rickettsia typhi (strain ATCC VR-144 / Wilmington)).